The sequence spans 130 residues: Fumarate reductase subunit C (130 aa).

A run of 3 helical transmembrane segments spans residues 33–53, 60–80, and 109–129; these read AVTT…LKGG, FVTF…LLGA, and VIKL…GIAL.

This sequence belongs to the FrdC family. Part of an enzyme complex containing four subunits: a flavoprotein (FrdA), an iron-sulfur protein (FrdB), and two hydrophobic anchor proteins (FrdC and FrdD).

It localises to the cell inner membrane. In terms of biological role, two distinct, membrane-bound, FAD-containing enzymes are responsible for the catalysis of fumarate and succinate interconversion; fumarate reductase is used in anaerobic growth, and succinate dehydrogenase is used in aerobic growth. Anchors the catalytic components of the fumarate reductase complex to the cell inner membrane, binds quinones. In Photorhabdus laumondii subsp. laumondii (strain DSM 15139 / CIP 105565 / TT01) (Photorhabdus luminescens subsp. laumondii), this protein is Fumarate reductase subunit C.